A 577-amino-acid chain; its full sequence is Zinc finger-containing ubiquitin peptidase 1 (577 aa).

The C2H2-type 1 zinc-finger motif lies at 2–24 (LSCNICGETVNSEPDMKAHLIVH). The segment at 29–52 (IICPFCKLSGINYNEICFHIETVH) adopts a C2H2-type 2; atypical zinc-finger fold. Residues 124–137 (ESRKYQKSREKKPG) show a composition bias toward basic and acidic residues. Positions 124-145 (ESRKYQKSREKKPGLSEAQGSI) are disordered. The segment at 153 to 176 (PECPFCGKIEGCSQDMEIHVKTKH) adopts a C2H2-type 3; atypical zinc-finger fold. The C2H2-type 4 zinc finger occupies 192–214 (YDCPMCGLVCTNYHILQEHVDLH). Positions 225–247 (DRVQCSSDRELAHRLQQEEDRKR) are MIU. Positions 238–260 (RLQQEEDRKRKSEESRQEREEFQ) are disordered. The tract at residues 248–273 (KSEESRQEREEFQKLQRQYGLDNSGG) is zUBD/ZHA. An N6-acetyllysine modification is found at Lys261. The active-site Nucleophile is Cys359. The Proton acceptor role is filled by His490. Asp511 is a catalytic residue.

Belongs to the peptidase C78 family. ZUFSP subfamily. Interacts with RPA1 and RPA2.

Its subcellular location is the cytoplasm. It is found in the nucleus. The enzyme catalyses Thiol-dependent hydrolysis of ester, thioester, amide, peptide and isopeptide bonds formed by the C-terminal Gly of ubiquitin (a 76-residue protein attached to proteins as an intracellular targeting signal).. Functionally, deubiquitinase with endodeubiquitinase activity that specifically interacts with and cleaves 'Lys-63'-linked long polyubiquitin chains. Shows only weak activity against 'Lys-11' and 'Lys-48'-linked chains. Plays an important role in genome stability pathways, functioning to prevent spontaneous DNA damage and also promote cellular survival in response to exogenous DNA damage. Modulates the ubiquitination status of replication protein A (RPA) complex proteins in response to replication stress. The polypeptide is Zinc finger-containing ubiquitin peptidase 1 (Mus musculus (Mouse)).